We begin with the raw amino-acid sequence, 466 residues long: Ribulose bisphosphate carboxylase (466 aa).

Residue Asn-111 participates in substrate binding. Lys-166 acts as the Proton acceptor in catalysis. Lys-168 provides a ligand contact to substrate. The Mg(2+) site is built by Lys-191, Asp-193, and Glu-194. N6-carboxylysine is present on Lys-191. His-287 functions as the Proton acceptor in the catalytic mechanism. The substrate site is built by Arg-288, His-321, and Ser-368.

Belongs to the RuBisCO large chain family. Type II subfamily. As to quaternary structure, homodimer. Requires Mg(2+) as cofactor.

It carries out the reaction 2 (2R)-3-phosphoglycerate + 2 H(+) = D-ribulose 1,5-bisphosphate + CO2 + H2O. The catalysed reaction is D-ribulose 1,5-bisphosphate + O2 = 2-phosphoglycolate + (2R)-3-phosphoglycerate + 2 H(+). Functionally, ruBisCO catalyzes two reactions: the carboxylation of D-ribulose 1,5-bisphosphate, the primary event in carbon dioxide fixation, as well as the oxidative fragmentation of the pentose substrate. Both reactions occur simultaneously and in competition at the same active site. The chain is Ribulose bisphosphate carboxylase from Rhodospirillum rubrum (strain ATCC 11170 / ATH 1.1.1 / DSM 467 / LMG 4362 / NCIMB 8255 / S1).